Reading from the N-terminus, the 281-residue chain is Ras-related protein Rab-40C (281 aa).

Positions 23, 26, 27, and 46 each coordinate GTP. Residues 41–49 (SPYAYSNGI) form a switch-I region. The Mg(2+) site is built by S46 and D69. G72, N126, and R127 together coordinate GTP. Residues 72 to 88 (GQGRFCTIFRSYSRGAQ) are switch-II. The SOCS box domain occupies 175 to 228 (LMRHGMEKIWRPNRVFSLQDLCCRAIVSCTPVHLIDKLPLPVTIKSHLKSFSMA). The tract at residues 245-281 (SGAGGSGSKGNSLKRSKSIRPPQSPPQNCSRSNCKIS) is disordered. Over residues 270 to 281 (PQNCSRSNCKIS) the composition is skewed to polar residues. A lipid anchor (S-palmitoyl cysteine) is attached at C273. C278 carries S-geranylgeranyl cysteine lipidation.

It belongs to the small GTPase superfamily. Rab family. In terms of assembly, component of the cullin-5-RING E3 ubiquitin-protein ligase complex (ECS(RAB40C) complex) composed of CUL5, Elongin BC (ELOB and ELOC), RNF7/RBX2 and RAB40C. Interacts with protein phosphatase 6 (PP6) complex components ANKRD28, ANKRD52, PPP6C, PP6R1 and PP6R2; the interaction leads to ANKRD28 ubiquitination and decreased PP6 activity. Interacts with DAB2IP; DAB2IP acts as a GAP for RAB40C. Mg(2+) serves as cofactor.

It localises to the cell membrane. The protein localises to the cytoplasm. It is found in the cytosol. Its subcellular location is the golgi apparatus membrane. The enzyme catalyses GTP + H2O = GDP + phosphate + H(+). Its pathway is protein modification; protein ubiquitination. Regulated by guanine nucleotide exchange factors (GEFs) which promote the exchange of bound GDP for free GTP. Regulated by GTPase activating proteins (GAPs) including DAB2IP, which increase the GTP hydrolysis activity. Inhibited by GDP dissociation inhibitors (GDIs). Its function is as follows. RAB40C small GTPase acts as substrate-recognition component of the ECS(RAB40C) E3 ubiquitin ligase complex which mediates the ubiquitination and subsequent proteasomal degradation of target proteins. The Rab40 subfamily belongs to the Rab family that are key regulators of intracellular membrane trafficking, from the formation of transport vesicles to their fusion with membranes. Rabs cycle between an inactive GDP-bound form and an active GTP-bound form that is able to recruit to membranes different sets of downstream effectors directly responsible for vesicle formation, movement, tethering and fusion. As part of the ECS(RAB40C) complex, mediates ANKRD28 ubiquitination and degradation, thereby inhibiting protein phosphatase 6 (PP6) complex activity and focal adhesion assembly during cell migration. Also negatively regulate lipid droplets accumulation in a GTP-dependent manner. In Mus musculus (Mouse), this protein is Ras-related protein Rab-40C.